Consider the following 136-residue polypeptide: Large ribosomal subunit protein uL16 (136 aa).

It belongs to the universal ribosomal protein uL16 family. As to quaternary structure, part of the 50S ribosomal subunit.

Binds 23S rRNA and is also seen to make contacts with the A and possibly P site tRNAs. The protein is Large ribosomal subunit protein uL16 of Orientia tsutsugamushi (strain Boryong) (Rickettsia tsutsugamushi).